Consider the following 273-residue polypeptide: F-actin-capping protein subunit alpha (273 aa).

This sequence belongs to the F-actin-capping protein alpha subunit family. As to quaternary structure, component of the F-actin capping complex, composed of a heterodimer of an alpha and a beta subunit.

The protein localises to the cytoplasm. The protein resides in the cytoskeleton. It localises to the actin patch. Its function is as follows. F-actin-capping proteins bind in a Ca(2+)-independent manner to the fast growing ends of actin filaments (barbed end) thereby blocking the exchange of subunits at these ends. Unlike other capping proteins (such as gelsolin and severin), these proteins do not sever actin filaments. The protein is F-actin-capping protein subunit alpha (fac-1) of Neurospora crassa (strain ATCC 24698 / 74-OR23-1A / CBS 708.71 / DSM 1257 / FGSC 987).